The chain runs to 192 residues: Peptidyl-tRNA hydrolase (192 aa).

Position 14 (tyrosine 14) interacts with tRNA. The Proton acceptor role is filled by histidine 19. Tyrosine 64, asparagine 66, and asparagine 112 together coordinate tRNA.

It belongs to the PTH family. As to quaternary structure, monomer.

The protein localises to the cytoplasm. The catalysed reaction is an N-acyl-L-alpha-aminoacyl-tRNA + H2O = an N-acyl-L-amino acid + a tRNA + H(+). In terms of biological role, hydrolyzes ribosome-free peptidyl-tRNAs (with 1 or more amino acids incorporated), which drop off the ribosome during protein synthesis, or as a result of ribosome stalling. Catalyzes the release of premature peptidyl moieties from peptidyl-tRNA molecules trapped in stalled 50S ribosomal subunits, and thus maintains levels of free tRNAs and 50S ribosomes. In Anaeromyxobacter dehalogenans (strain 2CP-1 / ATCC BAA-258), this protein is Peptidyl-tRNA hydrolase.